The following is a 208-amino-acid chain: Fibroblast growth factor 10 (208 aa).

The N-terminal stretch at 1–37 (MWKWILTHCASAFPHLPGCCCCCFLLLFLVSSVPVTC) is a signal peptide. Asn-51 and Asn-196 each carry an N-linked (GlcNAc...) asparagine glycan.

This sequence belongs to the heparin-binding growth factors family. In terms of assembly, interacts with FGFR1 and FGFR2. Interacts with FGFBP1.

It localises to the secreted. Functionally, plays an important role in the regulation of embryonic development, cell proliferation and cell differentiation. Required for normal branching morphogenesis. May play a role in wound healing. This is Fibroblast growth factor 10 (FGF10) from Homo sapiens (Human).